The following is a 37-amino-acid chain: Cytochrome b6-f complex subunit 5 (37 aa).

A helical transmembrane segment spans residues 5-25; it reads FLFGIVLGLIPVTLAGLFVTA.

The protein belongs to the PetG family. As to quaternary structure, the 4 large subunits of the cytochrome b6-f complex are cytochrome b6, subunit IV (17 kDa polypeptide, PetD), cytochrome f and the Rieske protein, while the 4 small subunits are PetG, PetL, PetM and PetN. The complex functions as a dimer.

Its subcellular location is the plastid. It localises to the chloroplast thylakoid membrane. Its function is as follows. Component of the cytochrome b6-f complex, which mediates electron transfer between photosystem II (PSII) and photosystem I (PSI), cyclic electron flow around PSI, and state transitions. PetG is required for either the stability or assembly of the cytochrome b6-f complex. This Daucus carota (Wild carrot) protein is Cytochrome b6-f complex subunit 5.